Reading from the N-terminus, the 400-residue chain is Glycerol-3-phosphate dehydrogenase [NAD(+)] 1 (400 aa).

NAD(+) contacts are provided by residues G50–G55, F138, K161, and A194. K161 contacts substrate. K254 functions as the Proton acceptor in the catalytic mechanism. NAD(+) contacts are provided by R319 and Q348. R319–N320 contacts substrate.

The protein belongs to the NAD-dependent glycerol-3-phosphate dehydrogenase family.

It catalyses the reaction sn-glycerol 3-phosphate + NAD(+) = dihydroxyacetone phosphate + NADH + H(+). This chain is Glycerol-3-phosphate dehydrogenase [NAD(+)] 1 (GPD1), found in Candida glabrata (strain ATCC 2001 / BCRC 20586 / JCM 3761 / NBRC 0622 / NRRL Y-65 / CBS 138) (Yeast).